The sequence spans 170 residues: Small ribosomal subunit protein bS16 (170 aa).

The segment at 109–170 (ALAEAEGGPS…AAESEAPAAE (62 aa)) is disordered. The segment covering 131-150 (AKKDEQPTEKAAEPAAEKAA) has biased composition (basic and acidic residues). A compositionally biased stretch (low complexity) spans 151 to 170 (EPAAEAPAEAAAESEAPAAE).

The protein belongs to the bacterial ribosomal protein bS16 family.

This is Small ribosomal subunit protein bS16 from Mycolicibacterium gilvum (strain PYR-GCK) (Mycobacterium gilvum (strain PYR-GCK)).